A 466-amino-acid chain; its full sequence is Asparagine--tRNA ligase (466 aa).

The protein belongs to the class-II aminoacyl-tRNA synthetase family. Homodimer.

The protein localises to the cytoplasm. The catalysed reaction is tRNA(Asn) + L-asparagine + ATP = L-asparaginyl-tRNA(Asn) + AMP + diphosphate + H(+). This Escherichia coli O157:H7 protein is Asparagine--tRNA ligase.